Here is a 255-residue protein sequence, read N- to C-terminus: 5-oxoprolinase subunit A 1 (255 aa).

This sequence belongs to the LamB/PxpA family. Forms a complex composed of PxpA, PxpB and PxpC.

The catalysed reaction is 5-oxo-L-proline + ATP + 2 H2O = L-glutamate + ADP + phosphate + H(+). Functionally, catalyzes the cleavage of 5-oxoproline to form L-glutamate coupled to the hydrolysis of ATP to ADP and inorganic phosphate. The polypeptide is 5-oxoprolinase subunit A 1 (Agrobacterium fabrum (strain C58 / ATCC 33970) (Agrobacterium tumefaciens (strain C58))).